The sequence spans 253 residues: Uridylate kinase (253 aa).

9–12 (KLSG) is an ATP binding site. Residue glycine 51 coordinates UMP. Positions 52 and 56 each coordinate ATP. UMP contacts are provided by residues aspartate 72 and 133-140 (SGNPFFTT). Positions 160, 166, and 169 each coordinate ATP.

This sequence belongs to the UMP kinase family. Homohexamer.

The protein resides in the cytoplasm. It catalyses the reaction UMP + ATP = UDP + ADP. Its pathway is pyrimidine metabolism; CTP biosynthesis via de novo pathway; UDP from UMP (UMPK route): step 1/1. With respect to regulation, inhibited by UTP. Its function is as follows. Catalyzes the reversible phosphorylation of UMP to UDP. The sequence is that of Uridylate kinase from Synechococcus sp. (strain JA-2-3B'a(2-13)) (Cyanobacteria bacterium Yellowstone B-Prime).